The chain runs to 193 residues: Cysteine and glycine-rich protein 1 (193 aa).

In terms of domain architecture, LIM zinc-binding 1 spans 10 to 61 (CGVCQKTVYFAEEVQCEGNSFHKSCFLCMVCKKNLDSTTVAVHGEEIYCKSC). Positions 64–69 (KKYGPK) match the Nuclear localization signal motif. Ser81 carries the phosphoserine modification. The residue at position 84 (Lys84) is an N6-acetyllysine. Lys91 participates in a covalent cross-link: Glycyl lysine isopeptide (Lys-Gly) (interchain with G-Cter in SUMO2). 4 positions are modified to N6-acetyllysine: Lys112, Lys131, Lys137, and Lys161. The 52-residue stretch at 119-170 (CPRCSQAVYAAEKVIGAGKSWHKACFRCAKCGKGLESTTLADKDGEIYCKGC) folds into the LIM zinc-binding 2 domain. Residue Ser192 is modified to Phosphoserine.

In terms of assembly, interacts with ASCC1; ASCC2 and TRIP4.

The protein localises to the nucleus. Could play a role in neuronal development. This is Cysteine and glycine-rich protein 1 (CSRP1) from Pongo abelii (Sumatran orangutan).